Here is a 492-residue protein sequence, read N- to C-terminus: Ketol-acid reductoisomerase (NADP(+)) (492 aa).

One can recognise a KARI N-terminal Rossmann domain in the interval 14–208 (LDQLGRCRFM…GGHKAGVLES (195 aa)). NADP(+) is bound by residues 45-48 (CGAQ), Arg68, Arg76, Ser78, and 108-110 (DKQ). Residue His132 is part of the active site. Residue Gly158 coordinates NADP(+). KARI C-terminal knotted domains follow at residues 209-344 (SFVA…NAPK) and 345-485 (YDGK…MTDM). The Mg(2+) site is built by Asp217, Glu221, Glu389, and Glu393. Residue Ser414 participates in substrate binding.

This sequence belongs to the ketol-acid reductoisomerase family. Requires Mg(2+) as cofactor.

The enzyme catalyses (2R)-2,3-dihydroxy-3-methylbutanoate + NADP(+) = (2S)-2-acetolactate + NADPH + H(+). It catalyses the reaction (2R,3R)-2,3-dihydroxy-3-methylpentanoate + NADP(+) = (S)-2-ethyl-2-hydroxy-3-oxobutanoate + NADPH + H(+). It functions in the pathway amino-acid biosynthesis; L-isoleucine biosynthesis; L-isoleucine from 2-oxobutanoate: step 2/4. The protein operates within amino-acid biosynthesis; L-valine biosynthesis; L-valine from pyruvate: step 2/4. Its function is as follows. Involved in the biosynthesis of branched-chain amino acids (BCAA). Catalyzes an alkyl-migration followed by a ketol-acid reduction of (S)-2-acetolactate (S2AL) to yield (R)-2,3-dihydroxy-isovalerate. In the isomerase reaction, S2AL is rearranged via a Mg-dependent methyl migration to produce 3-hydroxy-3-methyl-2-ketobutyrate (HMKB). In the reductase reaction, this 2-ketoacid undergoes a metal-dependent reduction by NADPH to yield (R)-2,3-dihydroxy-isovalerate. The polypeptide is Ketol-acid reductoisomerase (NADP(+)) (Haemophilus influenzae (strain PittEE)).